The sequence spans 541 residues: Chaperonin GroEL 2 (541 aa).

Residues 29–32, 86–90, G413, and D492 each bind ATP; these read TLGP and DGTTT.

Belongs to the chaperonin (HSP60) family. As to quaternary structure, forms a cylinder of 14 subunits composed of two heptameric rings stacked back-to-back. Interacts with the co-chaperonin GroES.

The protein resides in the cytoplasm. The enzyme catalyses ATP + H2O + a folded polypeptide = ADP + phosphate + an unfolded polypeptide.. Functionally, together with its co-chaperonin GroES, plays an essential role in assisting protein folding. The GroEL-GroES system forms a nano-cage that allows encapsulation of the non-native substrate proteins and provides a physical environment optimized to promote and accelerate protein folding. This Acidothermus cellulolyticus (strain ATCC 43068 / DSM 8971 / 11B) protein is Chaperonin GroEL 2.